The primary structure comprises 418 residues: Serine hydroxymethyltransferase (418 aa).

Residues Leu-121 and 125–127 (GHL) each bind (6S)-5,6,7,8-tetrahydrofolate. N6-(pyridoxal phosphate)lysine is present on Lys-230. 355 to 357 (SPF) provides a ligand contact to (6S)-5,6,7,8-tetrahydrofolate.

This sequence belongs to the SHMT family. As to quaternary structure, homodimer. The cofactor is pyridoxal 5'-phosphate.

It is found in the cytoplasm. It carries out the reaction (6R)-5,10-methylene-5,6,7,8-tetrahydrofolate + glycine + H2O = (6S)-5,6,7,8-tetrahydrofolate + L-serine. Its pathway is one-carbon metabolism; tetrahydrofolate interconversion. It functions in the pathway amino-acid biosynthesis; glycine biosynthesis; glycine from L-serine: step 1/1. Its function is as follows. Catalyzes the reversible interconversion of serine and glycine with tetrahydrofolate (THF) serving as the one-carbon carrier. This reaction serves as the major source of one-carbon groups required for the biosynthesis of purines, thymidylate, methionine, and other important biomolecules. Also exhibits THF-independent aldolase activity toward beta-hydroxyamino acids, producing glycine and aldehydes, via a retro-aldol mechanism. The chain is Serine hydroxymethyltransferase from Streptococcus agalactiae serotype III (strain NEM316).